The primary structure comprises 132 residues: Sec-independent protein translocase protein TatB (132 aa).

Residues 2–22 form a helical membrane-spanning segment; it reads FDGIGFMELLLIGILGLVVLG. Residues 68–132 are disordered; sequence ENQGLKDLSP…VSANPDKSNR (65 aa). Residues 102-122 show a composition bias toward low complexity; that stretch reads TPSASSSAPSESTPSEAPTAE.

It belongs to the TatB family. As to quaternary structure, the Tat system comprises two distinct complexes: a TatABC complex, containing multiple copies of TatA, TatB and TatC subunits, and a separate TatA complex, containing only TatA subunits. Substrates initially bind to the TatABC complex, which probably triggers association of the separate TatA complex to form the active translocon.

It localises to the cell inner membrane. Part of the twin-arginine translocation (Tat) system that transports large folded proteins containing a characteristic twin-arginine motif in their signal peptide across membranes. Together with TatC, TatB is part of a receptor directly interacting with Tat signal peptides. TatB may form an oligomeric binding site that transiently accommodates folded Tat precursor proteins before their translocation. This chain is Sec-independent protein translocase protein TatB, found in Shewanella woodyi (strain ATCC 51908 / MS32).